The sequence spans 483 residues: Replication factor C large subunit (483 aa).

44–51 contributes to the ATP binding site; it reads GSPGVGKT. The disordered stretch occupies residues 415–483; sequence AVDHGGGIFA…DGQAGLSDFM (69 aa). Positions 430 to 443 are enriched in acidic residues; that stretch reads AQSDTESDDDDDGD. A compositionally biased stretch (basic and acidic residues) spans 451–463; that stretch reads DEPKEESVNREQS.

It belongs to the activator 1 small subunits family. RfcL subfamily. As to quaternary structure, heteromultimer composed of small subunits (RfcS) and large subunits (RfcL).

In terms of biological role, part of the RFC clamp loader complex which loads the PCNA sliding clamp onto DNA. The sequence is that of Replication factor C large subunit from Natronomonas pharaonis (strain ATCC 35678 / DSM 2160 / CIP 103997 / JCM 8858 / NBRC 14720 / NCIMB 2260 / Gabara) (Halobacterium pharaonis).